We begin with the raw amino-acid sequence, 60 residues long: uncharacterized protein (60 aa).

This is an uncharacterized protein from Treponema pallidum (strain Nichols).